A 107-amino-acid chain; its full sequence is Small ribosomal subunit protein uS17 (107 aa).

Belongs to the universal ribosomal protein uS17 family. Part of the 30S ribosomal subunit.

One of the primary rRNA binding proteins, it binds specifically to the 5'-end of 16S ribosomal RNA. The protein is Small ribosomal subunit protein uS17 of Thermotoga petrophila (strain ATCC BAA-488 / DSM 13995 / JCM 10881 / RKU-1).